A 210-amino-acid polypeptide reads, in one-letter code: 3-hexulose-6-phosphate synthase (210 aa).

The protein belongs to the HPS/KGPDC family. HPS subfamily.

The catalysed reaction is D-ribulose 5-phosphate + formaldehyde = D-arabino-hex-3-ulose 6-phosphate. It participates in one-carbon metabolism; formaldehyde assimilation via RuMP pathway; D-fructose 6-phosphate from D-ribulose 5-phosphate and formaldehyde: step 1/2. Functionally, catalyzes the condensation of ribulose 5-phosphate with formaldehyde to form 3-hexulose 6-phosphate. This is 3-hexulose-6-phosphate synthase from Staphylococcus aureus (strain bovine RF122 / ET3-1).